A 724-amino-acid polypeptide reads, in one-letter code: NAD(+) hydrolase SARM1 (724 aa).

A mitochondrion-targeting transit peptide spans 1–27 (MVLTLLLSAYKLCRFFAMSGPRPGAER). The ARM 1 repeat unit spans residues 60-100 (EVQDALERALPELQQALSALKQAGGARAVGAGLAEVFQLVE). NAD(+) contacts are provided by residues tryptophan 103, arginine 110, 149–157 (EQILVAENR), and 190–193 (HMFK). ARM repeat units lie at residues 114–153 (QGLCDAIRLDGGLDLLLRLLQAPELETRVQAARLLEQILV), 155–193 (ENRDRVARIGLGVILNLAKEREPVELARSVAGILEHMFK), 196–235 (EETCQRLVAAGGLDAVLYWCRRTDPALLRHCALALGNCAL), 237–280 (GGQA…LATN), 281–314 (KEVEREVERSGTLALVEPLVASLDPGRFARCLVD), 315–354 (ASDTSQGRGPDDLQRLVPLLDSNRLEAQCIGAFYLCAEAA), and 359–402 (QGKT…EEVP). SAM domains follow at residues 412-476 (WKEA…LKTF) and 486-548 (NLAD…MLHS). Residues serine 548 and serine 558 each carry the phosphoserine modification. One can recognise a TIR domain in the interval 560 to 703 (DTPDVFISYR…KIIRFLQGRS (144 aa)). NAD(+) contacts are provided by residues 569 to 570 (RR) and glutamate 599. The active site involves glutamate 642. A disordered region spans residues 704 to 724 (SRDSSAGSDTSLEGAAPMGPT).

The protein belongs to the SARM1 family. In terms of assembly, homooctamer; forms an octameric ring via SAM domains. Interacts with TICAM1/TRIF and thereby interferes with TICAM1/TRIF function. Interacts with MAPK10/JNK3 and SDC2 (via cytoplasmic domain). Post-translationally, phosphorylation at Ser-548 by JNK kinases (MAPK8, MAPK9 and /or MAPK10) enhance the NAD(+) hydrolase (NADase) activity. Phosphorylation at Ser-548 and subsequent activation takes place in response to oxidative stress conditions and inhibits mitochondrial respiration. As to expression, predominantly expressed in brain, kidney and liver. Expressed at lower level in placenta.

Its subcellular location is the cytoplasm. The protein resides in the cell projection. It localises to the axon. It is found in the dendrite. The protein localises to the synapse. Its subcellular location is the mitochondrion. The catalysed reaction is NAD(+) + H2O = ADP-D-ribose + nicotinamide + H(+). It catalyses the reaction NAD(+) = cyclic ADP-beta-D-ribose + nicotinamide + H(+). It carries out the reaction NADP(+) + H2O = ADP-D-ribose 2'-phosphate + nicotinamide + H(+). Autoinhibited: in the inactive state, the enzymatic TIR domain is held apart by the autoinhibiting ARM repeats. NAD(+)-binding to ARM repeats maintains an inactive state by promoting interaction between ARM repeats and the TIR domain, thereby facilitating inhibition of the enzymatic TIR domain. Following activation, possibly by nicotinamide mononucleotide (NMN), auto-inhibitory interactions are released, allowing self-association of the TIR domains and subsequent activation of the NAD(+) hydrolase (NADase) activity. Self-association of TIR domains is facilitated by the octamer of SAM domains. NAD(+) hydrolase activity is inhibited by nicotinamide. Specifically inhibited by berberine chloride and zinc chloride. Functionally, NAD(+) hydrolase, which plays a key role in axonal degeneration following injury by regulating NAD(+) metabolism. Acts as a negative regulator of MYD88- and TRIF-dependent toll-like receptor signaling pathway by promoting Wallerian degeneration, an injury-induced form of programmed subcellular death which involves degeneration of an axon distal to the injury site. Wallerian degeneration is triggered by NAD(+) depletion: in response to injury, SARM1 is activated and catalyzes cleavage of NAD(+) into ADP-D-ribose (ADPR), cyclic ADPR (cADPR) and nicotinamide; NAD(+) cleavage promoting cytoskeletal degradation and axon destruction. Also able to hydrolyze NADP(+), but not other NAD(+)-related molecules. Can activate neuronal cell death in response to stress. Regulates dendritic arborization through the MAPK4-JNK pathway. Involved in innate immune response: inhibits both TICAM1/TRIF- and MYD88-dependent activation of JUN/AP-1, TRIF-dependent activation of NF-kappa-B and IRF3, and the phosphorylation of MAPK14/p38. This is NAD(+) hydrolase SARM1 from Homo sapiens (Human).